The following is a 279-amino-acid chain: MNKKNREVTSSWFTNLRDLVCAEFEKIEEEYAKAKGLKPGKFVRSSWERDGGGGGVMSVMKGKVFEKVGVNISTVFGEFSKAFRAEIPGAELDGKFFATGISLVAHLKSPLIPAMHFNTRYIETSKNWFGGGGDLTPFYPEEDETAKFHAAFKEACDKYDSGYYPKFKKQCDEYFYLKHRKEPRGVGGIFYDYLNSGNFEQDFSFTQDVGKALLSVYPEIVRNKLFLPWTDEQKEYQLIRRGRYVEFNLLYDRGTKFGLMTDGNVEAILMSLPPEVKWA.

S102 provides a ligand contact to substrate. A divalent metal cation contacts are provided by H106 and H116. H116 serves as the catalytic Proton donor. Residue 118–120 (NTR) coordinates substrate. A divalent metal cation is bound by residues H149 and H179. Positions 244–279 (YVEFNLLYDRGTKFGLMTDGNVEAILMSLPPEVKWA) are important for dimerization.

It belongs to the aerobic coproporphyrinogen-III oxidase family. As to quaternary structure, homodimer. It depends on a divalent metal cation as a cofactor.

It localises to the cytoplasm. It carries out the reaction coproporphyrinogen III + O2 + 2 H(+) = protoporphyrinogen IX + 2 CO2 + 2 H2O. It participates in porphyrin-containing compound metabolism; protoporphyrin-IX biosynthesis; protoporphyrinogen-IX from coproporphyrinogen-III (O2 route): step 1/1. Functionally, involved in the heme biosynthesis. Catalyzes the aerobic oxidative decarboxylation of propionate groups of rings A and B of coproporphyrinogen-III to yield the vinyl groups in protoporphyrinogen-IX. The polypeptide is Oxygen-dependent coproporphyrinogen-III oxidase (Rickettsia bellii (strain RML369-C)).